We begin with the raw amino-acid sequence, 168 residues long: EFIEVSEESFKGQWSVLCFYPADFTFVCPTELEDLQNEYAALKELGVEVFSASTDTHFTHKGWHDSSETIGKITYAMIGDPSQTLSRNFDVLNEVSGLADRGTFIIDPDGVVQAAEINAEGIGRDASTLVNKIKAAQYVRNNPGEVCPAKWQEGDETLKPSLDLVGKI.

Positions glutamate 1–tyrosine 138 constitute a Thioredoxin domain. Cysteine 28 functions as the Cysteine sulfenic acid (-SOH) intermediate in the catalytic mechanism.

The protein belongs to the peroxiredoxin family. AhpC/Prx1 subfamily. In terms of assembly, homodimer; disulfide-linked, upon oxidation. 5 homodimers assemble to form a ring-like decamer.

It localises to the cytoplasm. The enzyme catalyses a hydroperoxide + NADH + H(+) = an alcohol + NAD(+) + H2O. Its function is as follows. Thiol-specific peroxidase that catalyzes the reduction of hydrogen peroxide and organic hydroperoxides to water and alcohols, respectively. Plays a role in cell protection against oxidative stress by detoxifying peroxides. This Ferdinandcohnia aciditolerans (strain JCM 32973 / CCTCC AB 2017280 / YN-1) (Bacillus aciditolerans) protein is Alkyl hydroperoxide reductase C.